The sequence spans 423 residues: Putative competence-damage inducible protein (423 aa).

It belongs to the CinA family.

The protein is Putative competence-damage inducible protein of Streptococcus pyogenes serotype M6 (strain ATCC BAA-946 / MGAS10394).